The chain runs to 166 residues: Bacterial non-heme ferritin (166 aa).

One can recognise a Ferritin-like diiron domain in the interval 2-145; that stretch reads LSKNLLEALN…THINYLTRIG (144 aa). Residues glutamate 17, glutamate 50, histidine 53, glutamate 94, and glutamine 127 each contribute to the Fe cation site.

This sequence belongs to the ferritin family. Prokaryotic subfamily.

The protein resides in the cytoplasm. It carries out the reaction 4 Fe(2+) + O2 + 6 H2O = 4 iron(III) oxide-hydroxide + 12 H(+). Functionally, iron-storage protein. The protein is Bacterial non-heme ferritin (ftnA) of Staphylococcus aureus (strain MRSA252).